Reading from the N-terminus, the 216-residue chain is Adenylate kinase (216 aa).

10–15 (GAGKGT) contributes to the ATP binding site. Residues 30 to 59 (STGDMLRAAVGVGTEVGKRAKAVMDAGKLV) are NMP. AMP contacts are provided by residues Thr31, Arg36, 57-59 (KLV), 85-88 (GFPR), and Gln92. The segment at 126-163 (GRYTCAQCGTVYHDTDKVPVEEGVCDKCGSTHFKRRPD) is LID. Arg127 is an ATP binding site. Zn(2+)-binding residues include Cys130 and Cys133. ATP is bound at residue 136–137 (VY). Positions 150 and 153 each coordinate Zn(2+). Arg160 and Arg172 together coordinate AMP. Ala200 lines the ATP pocket.

The protein belongs to the adenylate kinase family. As to quaternary structure, monomer.

It is found in the cytoplasm. It carries out the reaction AMP + ATP = 2 ADP. It participates in purine metabolism; AMP biosynthesis via salvage pathway; AMP from ADP: step 1/1. Catalyzes the reversible transfer of the terminal phosphate group between ATP and AMP. Plays an important role in cellular energy homeostasis and in adenine nucleotide metabolism. The sequence is that of Adenylate kinase from Rhizobium etli (strain CIAT 652).